The sequence spans 435 residues: Enolase (435 aa).

Gln163 is a (2R)-2-phosphoglycerate binding site. Catalysis depends on Glu205, which acts as the Proton donor. Mg(2+)-binding residues include Asp243, Glu292, and Asp319. (2R)-2-phosphoglycerate contacts are provided by Lys344, Arg373, Ser374, and Lys395. The Proton acceptor role is filled by Lys344.

Belongs to the enolase family. Mg(2+) is required as a cofactor.

Its subcellular location is the cytoplasm. It is found in the secreted. The protein resides in the cell surface. The catalysed reaction is (2R)-2-phosphoglycerate = phosphoenolpyruvate + H2O. It participates in carbohydrate degradation; glycolysis; pyruvate from D-glyceraldehyde 3-phosphate: step 4/5. Functionally, catalyzes the reversible conversion of 2-phosphoglycerate (2-PG) into phosphoenolpyruvate (PEP). It is essential for the degradation of carbohydrates via glycolysis. The polypeptide is Enolase (Streptococcus equi subsp. zooepidemicus (strain MGCS10565)).